Consider the following 446-residue polypeptide: SPARC-related modular calcium-binding protein 2 (446 aa).

An N-terminal signal peptide occupies residues 1–21; it reads MLLPQLCWLPLLAGLLPPVPA. Residues 34–86 form the Kazal-like domain; sequence QDKDKDCSLDCAGSPQKPLCASDGRTFLSRCEFQRAKCKDPQLEIAYRGNCKD. 6 disulfides stabilise this stretch: Cys-40/Cys-71, Cys-44/Cys-64, Cys-53/Cys-84, Cys-90/Cys-113, Cys-124/Cys-131, and Cys-133/Cys-153. Positions 87-153 constitute a Thyroglobulin type-1 1 domain; the sequence is VSRCVAERKY…TAVAHKTPRC (67 aa). The interval 147–228 is disordered; that stretch reads AHKTPRCPGS…EHQSALEEAK (82 aa). Over residues 161–172 the composition is skewed to basic and acidic residues; it reads LPQREGTGKTDD. N-linked (GlcNAc...) asparagine glycosylation occurs at Asn-206. Residues 206-216 show a composition bias toward polar residues; sequence NKTNKNSVSSC. In terms of domain architecture, Thyroglobulin type-1 2 spans 213 to 281; the sequence is VSSCDQEHQS…TSTRYEQPKC (69 aa). 3 cysteine pairs are disulfide-bonded: Cys-216/Cys-240, Cys-251/Cys-258, and Cys-260/Cys-281. Over residues 217-228 the composition is skewed to basic and acidic residues; the sequence is DQEHQSALEEAK. EF-hand domains are found at residues 347–382 and 384–419; these read LEER…LRKK and KPKK…AKED. Residues Asp-360, Asn-362, Ser-364, Asp-366, Glu-371, Asp-397, Asn-399, Asp-401, Ser-403, and Glu-408 each contribute to the Ca(2+) site. N-linked (GlcNAc...) asparagine glycosylation is present at Asn-362. The interval 416-446 is disordered; it reads AKEDGKADTKKRHTPRGHAESTSNRQPRKQG.

In terms of assembly, binds various proteins from the extracellular matrix.

It localises to the secreted. The protein localises to the extracellular space. It is found in the extracellular matrix. Its subcellular location is the basement membrane. In terms of biological role, promotes matrix assembly and cell adhesiveness. Can stimulate endothelial cell proliferation, migration, as well as angiogenesis. The sequence is that of SPARC-related modular calcium-binding protein 2 (SMOC2) from Homo sapiens (Human).